We begin with the raw amino-acid sequence, 448 residues long: Serine--tRNA ligase (448 aa).

255-257 (TSE) lines the L-serine pocket. An ATP-binding site is contributed by 286-288 (RSE). Residue glutamate 309 participates in L-serine binding. 373 to 376 (EISS) serves as a coordination point for ATP. Serine 408 is an L-serine binding site.

It belongs to the class-II aminoacyl-tRNA synthetase family. Type-1 seryl-tRNA synthetase subfamily. Homodimer. The tRNA molecule binds across the dimer.

It localises to the cytoplasm. It catalyses the reaction tRNA(Ser) + L-serine + ATP = L-seryl-tRNA(Ser) + AMP + diphosphate + H(+). It carries out the reaction tRNA(Sec) + L-serine + ATP = L-seryl-tRNA(Sec) + AMP + diphosphate + H(+). The protein operates within aminoacyl-tRNA biosynthesis; selenocysteinyl-tRNA(Sec) biosynthesis; L-seryl-tRNA(Sec) from L-serine and tRNA(Sec): step 1/1. Catalyzes the attachment of serine to tRNA(Ser). Is also able to aminoacylate tRNA(Sec) with serine, to form the misacylated tRNA L-seryl-tRNA(Sec), which will be further converted into selenocysteinyl-tRNA(Sec). In Bordetella petrii (strain ATCC BAA-461 / DSM 12804 / CCUG 43448), this protein is Serine--tRNA ligase.